A 417-amino-acid chain; its full sequence is Serine hydroxymethyltransferase (417 aa).

Lys54 is modified (N6-acetyllysine). (6S)-5,6,7,8-tetrahydrofolate-binding positions include Leu121 and 125–127 (GHL). Lys229 bears the N6-(pyridoxal phosphate)lysine mark. N6-acetyllysine occurs at positions 250, 285, and 354. 355–357 (SPF) is a binding site for (6S)-5,6,7,8-tetrahydrofolate. N6-acetyllysine is present on Lys375.

It belongs to the SHMT family. In terms of assembly, homodimer. Requires pyridoxal 5'-phosphate as cofactor.

The protein localises to the cytoplasm. It catalyses the reaction (6R)-5,10-methylene-5,6,7,8-tetrahydrofolate + glycine + H2O = (6S)-5,6,7,8-tetrahydrofolate + L-serine. Its pathway is one-carbon metabolism; tetrahydrofolate interconversion. It functions in the pathway amino-acid biosynthesis; glycine biosynthesis; glycine from L-serine: step 1/1. Functionally, catalyzes the reversible interconversion of serine and glycine with tetrahydrofolate (THF) serving as the one-carbon carrier. This reaction serves as the major source of one-carbon groups required for the biosynthesis of purines, thymidylate, methionine, and other important biomolecules. Also exhibits THF-independent aldolase activity toward beta-hydroxyamino acids, producing glycine and aldehydes, via a retro-aldol mechanism. This is Serine hydroxymethyltransferase from Escherichia coli O1:K1 / APEC.